The primary structure comprises 877 residues: Dolichyl-phosphate-mannose--protein mannosyltransferase 1 (877 aa).

Asn83 is a glycosylation site (N-linked (GlcNAc...) asparagine). 2 consecutive transmembrane segments (helical) span residues 109 to 129 and 150 to 170; these read FFMDVHPPLAKMLFGAVGAIG and YIFMRQFPALLGVGTVILCYL. A glycan (N-linked (GlcNAc...) asparagine) is linked at Asn195. 4 helical membrane passes run 196–216, 226–246, 252–272, and 291–311; these read VTISRYILLDSPLIFFIAAAI, IPFTFGWYRSLLATGIALGLA, VGLFTVAWVGFLCIYQLWFLI, and IILLGVPIALYLGFFAIHFQL. The 55-residue stretch at 340-394 folds into the MIR 1 domain; the sequence is TEQVGLGSVVTIRHVDTQGGYLHSHEHFYQTGSKQQQITLYPHLDSNNKWLIEPY. Residues Asn395 and Asn400 are each glycosylated (N-linked (GlcNAc...) asparagine). 2 MIR domains span residues 403–462 and 472–528; these read FVPL…VEIV and QTFV…IETN. Transmembrane regions (helical) follow at residues 604-624, 643-663, 666-686, and 700-720; these read TWWAATLSIITFGTYVLVTVF, VQTFSYVLGWALHYLPFFIMG, LFLHHYLPALYFGILALGHFF, and FQQVAFVLVGLFSILSLVFYV. N-linked (GlcNAc...) asparagine glycosylation occurs at Asn721. Positions 778-877 are disordered; the sequence is VVEAKQTPKA…EDESVHQVQQ (100 aa). Composition is skewed to basic and acidic residues over residues 783–799, 807–816, and 847–857; these read QTPKAEPKLAKQDDHIE, VEEKEVKEEV, and NDEKSVEEKQQ.

The protein belongs to the glycosyltransferase 39 family. PMT1 and PMT2 form a functional heterodimer.

It localises to the endoplasmic reticulum membrane. It catalyses the reaction a di-trans,poly-cis-dolichyl beta-D-mannosyl phosphate + L-seryl-[protein] = 3-O-(alpha-D-mannosyl)-L-seryl-[protein] + a di-trans,poly-cis-dolichyl phosphate + H(+). The enzyme catalyses a di-trans,poly-cis-dolichyl beta-D-mannosyl phosphate + L-threonyl-[protein] = 3-O-(alpha-D-mannosyl)-L-threonyl-[protein] + a di-trans,poly-cis-dolichyl phosphate + H(+). It participates in protein modification; protein glycosylation. Its function is as follows. Protein mannosyltransferase (PMT) involved in hyphal growth and drug sensitivity. Transfers mannose from Dol-P-mannose to Ser or Thr residues on proteins. PMT1, PMT2 and PMT4 account for most of the protein-O-glycosylation activity, while PMT5 and PMT6 may specifically modulate a much narrower spectrum of target proteins. Accounts for the O-glycosylation of the cell wall proteins KRE9, PIR2, RHD3, and ALS1, as well as the SEC20 t-SNARE component. O-glycosylation of SEC20 is essential for its stability. Required for filamentation and early phases of biofilm formation. The sequence is that of Dolichyl-phosphate-mannose--protein mannosyltransferase 1 (PMT1) from Candida albicans (strain SC5314 / ATCC MYA-2876) (Yeast).